The following is a 341-amino-acid chain: MKKPELTATSVEKFLIEKFDSVSDLMQLSEGEESRAFSFDVGGRGYVLRVNSCADGFYKDRYVYRHFASAALPIPEVLDIGEFSESLTYCISRRAQGVTLQDLPETELPAVLQPVAEAMDAIAAADLSQTSGFGPFGPQGIGQYTTWRDFICAIADPHVYHWQTVMDDTVSASVAQALDELMLWAEDCPEVRHLVHADFGSNNVLTDNGRITAVIDWSEAMFGDSQYEVANIFFWRPWLACMEQQTRYFERRHPELAGSPRLRAYMLRIGLDQLYQSLVDGNFDDAAWAQGRCDAIVRSGAGTVGRTQIARRSAAVWTDGCVEVLADSGNRRPSTRPRAKE.

The active-site Proton acceptor is the aspartate 198.

The protein belongs to the aminoglycoside phosphotransferase family.

It carries out the reaction hygromycin B + ATP = 4-O-phosphohygromycin B + ADP + H(+). The aminoglycoside phosphotransferases achieve inactivation of their antibiotic substrates by phosphorylation. Only phosphorylates hygromycin and closely related compounds such as demethyl analogs and destomycin. The polypeptide is Hygromycin-B 4-O-kinase (hph) (Escherichia coli).